A 70-amino-acid polypeptide reads, in one-letter code: Large ribosomal subunit protein bL32c (70 aa).

2 disordered regions span residues 1–20 (MAVPKKRTSRSKKKIRKNVR) and 51–70 (NDDSSGSSESKLTAIDLDDP). The span at 52–61 (DDSSGSSESK) shows a compositional bias: polar residues.

The protein belongs to the bacterial ribosomal protein bL32 family.

Its subcellular location is the plastid. The protein resides in the chloroplast. This chain is Large ribosomal subunit protein bL32c (rpl32), found in Pinus thunbergii (Japanese black pine).